Reading from the N-terminus, the 738-residue chain is Ethylene receptor 1 (738 aa).

Helical transmembrane passes span 23–43, 53–73, and 92–112; these read ISDF…IYFV, WVLV…LINL, and VLTA…IPDL. 2 residues coordinate Cu cation: Cys65 and His69. One can recognise a GAF domain in the interval 158-307; the sequence is DRHTILKTTL…VVADQVAVAL (150 aa). The 236-residue stretch at 350–585 folds into the Histidine kinase domain; it reads VMNHEMRTPM…IFDVKLGISE (236 aa). His353 carries the post-translational modification Phosphohistidine; by autocatalysis. ADP-binding positions include 470–473, Asp513, Lys529, Ser544, and Leu548; that span reads NAVK. Positions 611–729 constitute a Response regulatory domain; sequence KVLVMDENGV…NIRDVLSDLL (119 aa). Residue Asp659 is modified to 4-aspartylphosphate. Residue Lys714 forms a Glycyl lysine isopeptide (Lys-Gly) (interchain with G-Cter in ubiquitin) linkage.

The protein belongs to the ethylene receptor family. Homodimer; disulfide-linked. Heteromer with ERS1, ERS2, ETR2 and EIN4. Interacts with AHP1, AHP2 and AHP3. Interacts with RTE1. Interacts with EIN2. Cu cation serves as cofactor. Autophosphorylated. Phosphorylation at His-353 modulates the interaction with EIN2. In terms of tissue distribution, leaves, roots, stems, seedlings, flowers, anthers, carpels and ovules.

Its subcellular location is the endoplasmic reticulum membrane. It catalyses the reaction ATP + protein L-histidine = ADP + protein N-phospho-L-histidine.. Functionally, ethylene receptor related to bacterial two-component regulators. Acts as a redundant negative regulator of ethylene signaling. In the presence of ethylene, the auto-kinase activity of ETR1 is inhibited and the non-phosphorylated kinase domain binds tightly to the corresponding domain of EIN2. This is Ethylene receptor 1 from Arabidopsis thaliana (Mouse-ear cress).